The primary structure comprises 99 residues: Putative type 4B encapsulin shell protein PF1875 (99 aa).

The protein belongs to the encapsulin family. Family 4B subfamily. As to quaternary structure, may self-assemble into facets and potentially into larger complexes.

It is found in the encapsulin nanocompartment. Its function is as follows. May be the encapsulin shell protein in a type 4 A-domain encapsulin nanocompartment system. Its cargo may be upstream glyceraldehyde-3-phosphate dehydrogenase (AC P61879). This Pyrococcus furiosus (strain ATCC 43587 / DSM 3638 / JCM 8422 / Vc1) protein is Putative type 4B encapsulin shell protein PF1875.